Consider the following 496-residue polypeptide: Nitric oxide synthase, inducible (496 aa).

FMN-binding residues include C6, E32, and Q36. One can recognise an FAD-binding FR-type domain in the interval 101-341 (KNLFTMRLRS…VRSVSGFQLP (241 aa)). Residue R121 coordinates NADP(+). The FAD site is built by H143, R277, Y279, S280, T295, and A297. Residue T300 coordinates NADP(+). Y301, V314, C315, and S316 together coordinate FAD. Residues T355, R388, S417, R418, K424, Y426, Q428, and D461 each contribute to the NADP(+) site.

The protein belongs to the NOS family. Homodimer. Interacts with NHERF1. Interacts with GAPDH; induced by oxidatively-modified low-densitity lipoprotein (LDL(ox)). Interacts with S100A8 and S100A9 to form the iNOS-S100A8/9 transnitrosylase complex. Interacts with SPSB1, SPSB2 and SPSB4. Interacts with ELOC and CUL5 in the presence of SPSB1 or SPSB2 or SPSB4. Forms a complex with ASL, ASS1 and HSP90AA1; the complex regulates cell-autonomous L-arginine synthesis and citrulline recycling while channeling extracellular L-arginine to nitric oxide synthesis pathway. Heme b serves as cofactor. It depends on FAD as a cofactor. FMN is required as a cofactor. The cofactor is (6R)-L-erythro-5,6,7,8-tetrahydrobiopterin. Polyubiquitinated; mediated by SPSB1, SPSB2 and SPSB4, leading to proteasomal degradation.

The protein resides in the cytoplasm. The protein localises to the cytosol. It carries out the reaction 2 L-arginine + 3 NADPH + 4 O2 + H(+) = 2 L-citrulline + 2 nitric oxide + 3 NADP(+) + 4 H2O. Not stimulated by calcium/calmodulin. Functionally, produces nitric oxide (NO) which is a messenger molecule with diverse functions throughout the body. In macrophages, NO mediates tumoricidal and bactericidal actions. Also has nitrosylase activity and mediates cysteine S-nitrosylation of cytoplasmic target proteins such PTGS2/COX2. As component of the iNOS-S100A8/9 transnitrosylase complex involved in the selective inflammatory stimulus-dependent S-nitrosylation of GAPDH implicated in regulation of the GAIT complex activity and probably multiple targets including ANXA5, EZR, MSN and VIM. Involved in inflammation, enhances the synthesis of pro-inflammatory mediators such as IL6 and IL8. In Oryctolagus cuniculus (Rabbit), this protein is Nitric oxide synthase, inducible (NOS2).